The following is a 133-amino-acid chain: NADPH-dependent 7-cyano-7-deazaguanine reductase (133 aa).

Cysteine 48 (thioimide intermediate) is an active-site residue. Aspartate 55 functions as the Proton donor in the catalytic mechanism. Substrate is bound by residues 70–72 (VEL) and 89–90 (QE).

Belongs to the GTP cyclohydrolase I family. QueF type 1 subfamily.

Its subcellular location is the cytoplasm. The enzyme catalyses 7-aminomethyl-7-carbaguanine + 2 NADP(+) = 7-cyano-7-deazaguanine + 2 NADPH + 3 H(+). It functions in the pathway tRNA modification; tRNA-queuosine biosynthesis. In terms of biological role, catalyzes the NADPH-dependent reduction of 7-cyano-7-deazaguanine (preQ0) to 7-aminomethyl-7-deazaguanine (preQ1). The chain is NADPH-dependent 7-cyano-7-deazaguanine reductase from Thermoanaerobacter pseudethanolicus (strain ATCC 33223 / 39E) (Clostridium thermohydrosulfuricum).